The chain runs to 428 residues: Homoserine dehydrogenase (428 aa).

5 residues coordinate NADPH: F10, T12, V13, R44, and K106. Position 13 (V13) interacts with NAD(+). Positions 13, 44, and 106 each coordinate NADP(+). Residues E130, V133, G135, and I137 each coordinate Na(+). Residues G188 and E191 each contribute to the NADP(+) site. L-homoserine contacts are provided by E191 and D202. The active-site Proton donor is the K206. G303 is an NADPH binding site. G303 serves as a coordination point for NAD(+). G303 contributes to the NADP(+) binding site. In terms of domain architecture, ACT spans 351 to 425; the sequence is YFSVETPDST…DFKLLNYFKV (75 aa).

It belongs to the homoserine dehydrogenase family. A metal cation is required as a cofactor.

The enzyme catalyses L-homoserine + NADP(+) = L-aspartate 4-semialdehyde + NADPH + H(+). The catalysed reaction is L-homoserine + NAD(+) = L-aspartate 4-semialdehyde + NADH + H(+). It functions in the pathway amino-acid biosynthesis; L-methionine biosynthesis via de novo pathway; L-homoserine from L-aspartate: step 3/3. Its pathway is amino-acid biosynthesis; L-threonine biosynthesis; L-threonine from L-aspartate: step 3/5. Functionally, catalyzes the conversion of L-aspartate-beta-semialdehyde (L-Asa) to L-homoserine (L-Hse), the third step in the biosynthesis of threonine and methionine from aspartate. The chain is Homoserine dehydrogenase (hom) from Lactococcus lactis subsp. lactis (strain IL1403) (Streptococcus lactis).